A 207-amino-acid polypeptide reads, in one-letter code: Suppressor of IKBKE 1 (207 aa).

Coiled-coil stretches lie at residues 70–102 (HILL…DALE) and 164–192 (CKVQ…ESLQ).

It belongs to the SIKE family. As to quaternary structure, interacts with IKBKE and TBK1 via its coiled coil region. Interaction with TBK1 is disrupted upon viral infection or TLR3 stimulation. Interacts with CDC42BPB. Interacts with SIKE1 which mediates association with the STRIPAK core complex composed of PP2A catalytic and scaffolding subunits, the striatins (PP2A regulatory subunits), the striatin-associated proteins MOB4, STRIP1 and STRIP2, PDCD10 and members of the STE20 kinases, such as STK24 and STK26.

It localises to the cytoplasm. Physiological suppressor of IKK-epsilon and TBK1 that plays an inhibitory role in virus- and TLR3-triggered IRF3. Inhibits TLR3-mediated activation of interferon-stimulated response elements (ISRE) and the IFN-beta promoter. May act by disrupting the interactions of IKBKE or TBK1 with TICAM1/TRIF, IRF3 and RIGI. Does not inhibit NF-kappa-B activation pathways. Associates with the striatin-interacting phosphatase and kinase (STRIPAK) core complex, forming the extended (SIKE1:SLMAP)STRIPAK complex. The (SIKE1:SLMAP)STRIPAK complex dephosphorylates STK3 leading to the inhibition of Hippo signaling and the control of cell growth. The polypeptide is Suppressor of IKBKE 1 (Sike1) (Mus musculus (Mouse)).